The chain runs to 309 residues: Porphobilinogen deaminase (309 aa).

Residue Cys241 is modified to S-(dipyrrolylmethanemethyl)cysteine.

It belongs to the HMBS family. In terms of assembly, monomer. Dipyrromethane is required as a cofactor.

It carries out the reaction 4 porphobilinogen + H2O = hydroxymethylbilane + 4 NH4(+). The protein operates within porphyrin-containing compound metabolism; protoporphyrin-IX biosynthesis; coproporphyrinogen-III from 5-aminolevulinate: step 2/4. Functionally, tetrapolymerization of the monopyrrole PBG into the hydroxymethylbilane pre-uroporphyrinogen in several discrete steps. This chain is Porphobilinogen deaminase, found in Desulforudis audaxviator (strain MP104C).